The following is a 362-amino-acid chain: Protein RecA (362 aa).

65–72 (GPESSGKT) provides a ligand contact to ATP. Residues 323-362 (RVANGMEPLNEKSTKETADDKASGKTGENKQETIEEASKE) are disordered. A compositionally biased stretch (basic and acidic residues) spans 331–362 (LNEKSTKETADDKASGKTGENKQETIEEASKE).

Belongs to the RecA family.

It is found in the cytoplasm. Functionally, can catalyze the hydrolysis of ATP in the presence of single-stranded DNA, the ATP-dependent uptake of single-stranded DNA by duplex DNA, and the ATP-dependent hybridization of homologous single-stranded DNAs. It interacts with LexA causing its activation and leading to its autocatalytic cleavage. In Limosilactobacillus reuteri (strain DSM 20016) (Lactobacillus reuteri), this protein is Protein RecA.